Consider the following 167-residue polypeptide: NADH-quinone oxidoreductase subunit B (167 aa).

Residues Cys-40, Cys-41, Cys-105, and Cys-134 each coordinate [4Fe-4S] cluster.

It belongs to the complex I 20 kDa subunit family. NDH-1 is composed of 14 different subunits. Subunits NuoB, C, D, E, F, and G constitute the peripheral sector of the complex. [4Fe-4S] cluster serves as cofactor.

It is found in the cell inner membrane. The catalysed reaction is a quinone + NADH + 5 H(+)(in) = a quinol + NAD(+) + 4 H(+)(out). Its function is as follows. NDH-1 shuttles electrons from NADH, via FMN and iron-sulfur (Fe-S) centers, to quinones in the respiratory chain. The immediate electron acceptor for the enzyme in this species is believed to be ubiquinone. Couples the redox reaction to proton translocation (for every two electrons transferred, four hydrogen ions are translocated across the cytoplasmic membrane), and thus conserves the redox energy in a proton gradient. This is NADH-quinone oxidoreductase subunit B from Campylobacter jejuni subsp. jejuni serotype O:2 (strain ATCC 700819 / NCTC 11168).